A 904-amino-acid polypeptide reads, in one-letter code: MSRPLPYHIYFFTGLLTCWILCTSSAHKCTVRHEVADCSHLKLTQIPEDLPTNITVLNLTHNQLRRLPPANFTRYSRLTILDGGFNSISKLEPELCQNLPWLEILNLQHNEISQLSDKTFVFCMNLTELHLMSNSIQKIQNDPFKNLKNLIKLDLSHNGLSSTKLGTQLQLENLQELLLSNNKISSLTPEELDFLGNSSLERLELSSNQIKEFSPGCFHAIGKLSGLSLNNAKLSPSLTEKLCLELSNTSIENLSLSSNQLDTISHTTFSGLKQTNLTTLDLSRSSLRVMDNDSFAWLPHLEYLSLEYNNIEHLSSRSFYGLSNLRHLNLRWSFTRQSISLTSLPKIDDFSFQWLKCLEYLNMEDNNFPSIKRNTFTGLVRLKFLSLSNSFSSLRTLTNETFLSLAGSPLLLLNLTKNKISKIQSGAFSWLGHLEVLDLGLNEIGQELTGQEWRGLDNIVEIYLSYNKYLELTTNSFTSVPSLQRLMLRRVALKNVACSPSPFRPLPNLVILDLSNNNIANVNDELLKGLEKLEILDLQHNNLARLWKHANPGGPVQFLKGLSHLRILNLGSNGFDEIPVEAFKDLRELKSIDLGMNNLNILPQSVFDNQVSLKSLSLQKNLITSVQKTVFGPAFRNLSYLDMRFNPFDCTCESIAWFVNWINSTHTNISELSNHYLCNTPPQYHGFPVMLFDVSPCKDSAPFELLFMINTNILLIFIFIVLLIHFEGWRISFYWNVSVHRVLGFKEIDRAEQFEYAAYIIHAYKDRDWVWKHFSPMEEEDHTLRFCLEERDFEAGVLKLEAIVNSIRRSRKIIFVITQNLLKDPLCKRFKVHRAVQQAIEQNLDSIILIFLEEIPDYKLNHALCLRRGMFKSHCILNWPVQKERVNAFHHKLKVALGSRNSAH.

The signal sequence occupies residues 1–26 (MSRPLPYHIYFFTGLLTCWILCTSSA). The region spanning 27-52 (HKCTVRHEVADCSHLKLTQIPEDLPT) is the LRRNT domain. Residues 27-705 (HKCTVRHEVA…PCKDSAPFEL (679 aa)) are Lumenal-facing. A disulfide bond links Cys29 and Cys38. 3 N-linked (GlcNAc...) asparagine glycosylation sites follow: Asn53, Asn58, and Asn71. 6 LRR repeats span residues 53-74 (NITVLNLTHNQLRRLPPANFTR), 77-98 (RLTILDGGFNSISKLEPELCQN), 101-122 (WLEILNLQHNEISQLSDKTFVF), 125-146 (NLTELHLMSNSIQKIQNDPFKN), 149-170 (NLIKLDLSHNGLSSTKLGTQLQ), and 173-196 (NLQELLLSNNKISSLTPEELDFLG). The cysteines at positions 96 and 123 are disulfide-linked. Asn125 is a glycosylation site (N-linked (GlcNAc...) asparagine). N-linked (GlcNAc...) asparagine glycosylation occurs at Asn197. LRR repeat units follow at residues 199-220 (SLERLELSSNQIKEFSPGCFHA) and 223-245 (KLSGLSLNNAKLSPSLTEKLCLE). Asn248, Asn253, Asn276, and Asn292 each carry an N-linked (GlcNAc...) asparagine glycan. 14 LRR repeats span residues 250 to 271 (SIENLSLSSNQLDTISHTTFSG), 276 to 297 (NLTTLDLSRSSLRVMDNDSFAW), 300 to 321 (HLEYLSLEYNNIEHLSSRSFYG), 324 to 345 (NLRHLNLRWSFTRQSISLTSLP), 357 to 378 (CLEYLNMEDNNFPSIKRNTFTG), 381 to 401 (RLKFLSLSNSFSSLRTLTNET), 409 to 430 (PLLLLNLTKNKISKIQSGAFSW), 433 to 455 (HLEVLDLGLNEIGQELTGQEWRG), 466 to 487 (YNKYLELTTNSFTSVPSLQRLM), 508 to 529 (NLVILDLSNNNIANVNDELLKG), 532 to 553 (KLEILDLQHNNLARLWKHANPG), 564 to 585 (HLRILNLGSNGFDEIPVEAFKD), 588 to 609 (ELKSIDLGMNNLNILPQSVFDN), and 612 to 633 (SLKSLSLQKNLITSVQKTVFGP). N-linked (GlcNAc...) asparagine glycosylation is found at Asn399 and Asn414. Asn637, Asn663, and Asn668 each carry an N-linked (GlcNAc...) asparagine glycan. Residues 646-699 (NPFDCTCESIAWFVNWINSTHTNISELSNHYLCNTPPQYHGFPVMLFDVSPCKD) form the LRRCT domain. Disulfide bonds link Cys650–Cys678 and Cys652–Cys697. The helical transmembrane segment at 706–726 (LFMINTNILLIFIFIVLLIHF) threads the bilayer. The Cytoplasmic segment spans residues 727-904 (EGWRISFYWN…VALGSRNSAH (178 aa)). Positions 754–897 (FEYAAYIIHA…AFHHKLKVAL (144 aa)) constitute a TIR domain. The residue at position 759 (Tyr759) is a Phosphotyrosine. Residues Lys812 and Lys831 each participate in a glycyl lysine isopeptide (Lys-Gly) (interchain with G-Cter in ubiquitin) cross-link. Tyr858 carries the phosphotyrosine modification.

Belongs to the Toll-like receptor family. In terms of assembly, monomer and homodimer; dimerization is triggered by ligand-binding and is required for TLR3 signaling. Interacts (via transmembrane domain) with UNC93B1. Interacts with TICAM1 (via the TIR domain) in response to poly(I:C) and this interaction is enhanced the presence of WDFY1. Interacts with SRC; upon binding of double-stranded RNA. The tyrosine-phosphorylated form (via TIR domain) interacts with WDFY1 (via WD repeat 2) in response to poly(I:C). Post-translationally, ubiquitinated by TRIM3; leading to recognition and sorting of polyubiquitinated TLR3 by the ESCRT complexes. Ubiquitinated by ZNRF1 via 'Lys-63'-linked ubiquitin chains; leading to TLR3 lysosomal trafficking and degradation.

Its subcellular location is the endoplasmic reticulum membrane. It is found in the endosome membrane. It localises to the early endosome. Functionally, key component of innate and adaptive immunity. TLRs (Toll-like receptors) control host immune response against pathogens through recognition of molecular patterns specific to microorganisms. TLR3 is a nucleotide-sensing TLR which is activated by double-stranded RNA, a sign of viral infection. Acts via the adapter TRIF/TICAM1, leading to NF-kappa-B activation, cytokine secretion and the inflammatory response. The polypeptide is Toll-like receptor 3 (TLR3) (Boselaphus tragocamelus (Nilgai)).